A 145-amino-acid chain; its full sequence is UPF0179 protein Msm_0285 (145 aa).

Belongs to the UPF0179 family.

The sequence is that of UPF0179 protein Msm_0285 from Methanobrevibacter smithii (strain ATCC 35061 / DSM 861 / OCM 144 / PS).